We begin with the raw amino-acid sequence, 362 residues long: Anthranilate phosphoribosyltransferase (362 aa).

5-phospho-alpha-D-ribose 1-diphosphate contacts are provided by residues G96, 99-100 (GD), T104, 106-109 (NIST), 124-132 (KHGNRAASS), and G136. Position 96 (G96) interacts with anthranilate. S108 is a binding site for Mg(2+). N127 contributes to the anthranilate binding site. R182 provides a ligand contact to anthranilate. Residues D240 and E241 each coordinate Mg(2+).

This sequence belongs to the anthranilate phosphoribosyltransferase family. As to quaternary structure, homodimer. Mg(2+) serves as cofactor.

It carries out the reaction N-(5-phospho-beta-D-ribosyl)anthranilate + diphosphate = 5-phospho-alpha-D-ribose 1-diphosphate + anthranilate. Its pathway is amino-acid biosynthesis; L-tryptophan biosynthesis; L-tryptophan from chorismate: step 2/5. In terms of biological role, catalyzes the transfer of the phosphoribosyl group of 5-phosphorylribose-1-pyrophosphate (PRPP) to anthranilate to yield N-(5'-phosphoribosyl)-anthranilate (PRA). This chain is Anthranilate phosphoribosyltransferase, found in Rhodococcus opacus (strain B4).